We begin with the raw amino-acid sequence, 510 residues long: Abscisic acid 8'-hydroxylase 2 (510 aa).

The chain crosses the membrane as a helical span at residues 3–23; the sequence is FLLFFVFVTAAVLCFVVPAFL. Residue C441 participates in heme binding.

This sequence belongs to the cytochrome P450 family. It depends on heme as a cofactor.

It localises to the membrane. It catalyses the reaction 2-cis-(+)-abscisate + reduced [NADPH--hemoprotein reductase] + O2 = (+)-8'-hydroxyabscisate + oxidized [NADPH--hemoprotein reductase] + H2O + H(+). It participates in plant hormone degradation; abscisic acid degradation. Functionally, involved in the oxidative degradation of abscisic acid. The protein is Abscisic acid 8'-hydroxylase 2 (CYP707A6) of Oryza sativa subsp. japonica (Rice).